A 223-amino-acid polypeptide reads, in one-letter code: Ion-translocating oxidoreductase complex subunit E (223 aa).

Transmembrane regions (helical) follow at residues 17 to 37, 38 to 58, 68 to 88, 91 to 111, 124 to 144, 156 to 176, and 181 to 201; these read SLVQ…TINA, IGLG…ISIL, IPIY…LLHA, FNLY…CIVV, VISF…MFVI, FLFG…FTFI, and TIIL…VIAF.

The protein belongs to the NqrDE/RnfAE family. In terms of assembly, the complex is composed of six subunits: RnfA, RnfB, RnfC, RnfD, RnfE and RnfG.

It is found in the cell inner membrane. In terms of biological role, part of a membrane-bound complex that couples electron transfer with translocation of ions across the membrane. The protein is Ion-translocating oxidoreductase complex subunit E of Buchnera aphidicola subsp. Schizaphis graminum (strain Sg).